Consider the following 432-residue polypeptide: Adenylosuccinate synthetase (432 aa).

GTP is bound by residues 12-18 (GDEGKGK) and 40-42 (GHT). Asp13 serves as the catalytic Proton acceptor. Positions 13 and 40 each coordinate Mg(2+). Residues 13–16 (DEGK), 38–41 (NAGH), Thr132, Arg146, Gln226, Thr241, and Arg305 each bind IMP. His41 functions as the Proton donor in the catalytic mechanism. A substrate-binding site is contributed by 301–307 (TVTGRKR). GTP contacts are provided by residues Arg307, 333-335 (KLD), and 415-417 (STS).

The protein belongs to the adenylosuccinate synthetase family. Homodimer. Requires Mg(2+) as cofactor.

The protein localises to the cytoplasm. The catalysed reaction is IMP + L-aspartate + GTP = N(6)-(1,2-dicarboxyethyl)-AMP + GDP + phosphate + 2 H(+). The protein operates within purine metabolism; AMP biosynthesis via de novo pathway; AMP from IMP: step 1/2. Plays an important role in the de novo pathway of purine nucleotide biosynthesis. Catalyzes the first committed step in the biosynthesis of AMP from IMP. The sequence is that of Adenylosuccinate synthetase from Allorhizobium ampelinum (strain ATCC BAA-846 / DSM 112012 / S4) (Agrobacterium vitis (strain S4)).